The primary structure comprises 1420 residues: MKDLVKFLKAQSKTSEDFDVIKIGLASPDMIRSWSYGEVKKPETINYRTFKPERDGLFCARIFGPVKDYECLCGKYKRLKHRGVICEKCGVEVTQAKVRRERMGHIELASPVAHIWFLKSLPSRIGLLLDMPLRDIERVLYFESYIVIEPGMTDLERGQLLTEEQFLDAEDRWQDEFDAKMGAEAIQALLRDMDLEVECETLREELQSTNSETKRKKITKRLKLLESFIQSGNKPEWMVMTVLPVLPPDLRPLVPLDGGRFATSDLNDLYRRVINRNNRLKRLLDLIAPDIIVRNEKRMLQESVDALLDNGRRGRAITGSNRRPLKSLADMIKGKQGRFRQNLLGKRVDYSGRSVITVGPYLHLHQCGLPKKMALELFRPFIYAKLESRGFATTIKAAKKMVEREDAIVWDILADVIREHPILLNRAPTLHRLGIQAFEPILIEGKAIQLHPLVCAAFNADFDGDQMAVHVPLTLEAQLEARALMMSTNNILSPANGEPIIVPSQDVVLGLYYMTRDKVNGKGEGMLLQDSREAEKAYRTGQAELHSRVKVRITEYVKNAIGEFEPQTHLVDTTIGRAILWMIAPKGMPFSLFNQTLGKKAISKLINESYRRLGLKESVLFADHIMYTGFAYAARSGSSVGIDDMVIPQKKYEIISAAEEEVAEIQEQFQSGLVTAGERYNKVIDIWAAANERVAKAMMENLSQEEVINREGQPEKQASFNSIFMMADSGARGSAAQIRQLAGMRGLMARPDGSIIETPITANFREGLNVLQYFISTHGARKGLADTALKTANSGYLTRRLVDVAQDLVIIEDDCGTHEGIVMTPLIEGGDVKEALRDRVLGRVAAEDILKPGTNEVLISRNTLLDEKLCDVIDENSVDSIKVRSVVTCDTDFGVCAKCYGRDLARGHLINQGEAVGVIAAQSIGEPGTQLTMRTFHIGGAASAAAKESSVQVKNTGTLRLTNVKFVTNKEGKLVLTSRNTELTIIDTFGRTKEHYKVPYGAVLNHADGEEVTAGETVANWDPHTMPVISEVSGFVKFVEIVDGLTVTRQTDELTGLSSIVVQDVGERATAGKDLRPALKLVDAQGNDIFIPGTDVMAQYFLPGKAIVTLDDGAEVFVGEPLARIPQESVGTKDITGGLPRVADLFEARKPKEPAILAEISGIVSFGKETKGKRRLLITPMEGETYEEMIPKWRQLNVFEGELVQRGDLISDGAETPHDILRLRGVHAVTDYIVNEVQEVYRLQGVKINDKHIEVIVRQMLRKAIITNAYDSEFLEGEQVEVARVKIVNRKRAEEGKPLVEFERELLGITKASLATESFISAASFQETTRVLTEAAVAGKRDELRGLKENVIVGRLIPAGTGFAYHQNRQKNRLVGGMENTTEVKLSAVDEEEIASEFTFSAEDATANLAEMLNMADDAE.

4 residues coordinate Zn(2+): cysteine 71, cysteine 73, cysteine 86, and cysteine 89. Mg(2+) contacts are provided by aspartate 461, aspartate 463, and aspartate 465. Cysteine 815, cysteine 889, cysteine 896, and cysteine 899 together coordinate Zn(2+).

The protein belongs to the RNA polymerase beta' chain family. The RNAP catalytic core consists of 2 alpha, 1 beta, 1 beta' and 1 omega subunit. When a sigma factor is associated with the core the holoenzyme is formed, which can initiate transcription. It depends on Mg(2+) as a cofactor. Zn(2+) is required as a cofactor.

It carries out the reaction RNA(n) + a ribonucleoside 5'-triphosphate = RNA(n+1) + diphosphate. In terms of biological role, DNA-dependent RNA polymerase catalyzes the transcription of DNA into RNA using the four ribonucleoside triphosphates as substrates. This is DNA-directed RNA polymerase subunit beta' from Histophilus somni (strain 129Pt) (Haemophilus somnus).